We begin with the raw amino-acid sequence, 56 residues long: Protein p56 (56 aa).

Belongs to the phi29likevirus protein p56 family. In terms of assembly, homodimer. Interacts with host UDG; this interaction inhibits the uracil-DNA glycosylase.

Its function is as follows. Inhibits the host uracil-DNA glycosylase (UDG), an enzyme which removes uracil residues from DNA by the base excision repair. Interacts with host uracil-DNA glycosylase and prevents the latter from binding to DNA. Since the viral DNA polymerase efficiently incorporates dUMP into DNA, the virus needs to prevent the deleterious effect caused by host UDG when it eliminates uracil residues present in the viral genome. The chain is Protein p56 from Bacillus phage phi29 (Bacteriophage phi-29).